A 1198-amino-acid chain; its full sequence is MPSAVLEKPLNEINKSISTTANVHFINDPTLSEQFDTIQLSFELFIRVFPDTGSDDSNNMSENKFVLIKLLGAPDYFKEFKIYRVTSIDHSAPTSNSVIFINHSNLLKFDNQLTLNSCVIQSIDYSCIPTIESLFVSVPPNIYSTLHDKPSTSIREQFINTFLLNSGSVVGTGDIIRSINGEVKLSEPVSQGIVSNNTNIVLIKTVENNNDDIDYNEKEIEDQEVSEDDLDSEIHLDLSTYLSSSLQIDSPAVHSVKLKVEPLPAKMSVDMLPPIWLKEDTELFVFANTAELPKLGFPVFNGDSVKLNYNNDKMIVKLFTFIEPNKSFRRRTLYLSPILLANLKLSSNSEVTLEPIRQRDHPFTNFFPVAKSVTISRVSSHITMDKTYQQHFFSELKTTFHKNLKCVKRGDFVPVVIDTVLAKTMFDTNNLIQQQQQLQPGEEENAPDMGVIPTGDPDEVAWFKIVDISGESHENETNQFIIDPTKTRLISSGVEFIKLPPNDFTHWYQYLKLPPVFNFNKAIDSNPTCFKYVSEFKKIVTTSLNSRSKINLKTTILLNSMTRGLGKTTMVRSVSTELGLNLIELDCFDLINPGAELKTIGLLTGKIDKLIGAQENSTDTDSSYHVIYLKHIENLCAQSNQNEQGANITTSLSLKVIQTLNEYLNDYSNLMIIMSCNDLDKLNENLRSLIKFQIDFSVPDEKERLEVFKFLIENETHKLINSNNPEPFEDREEFEDQFDVSTVSFSRRHDISFSSLALQSAGLTPRDLMSIIKKAKRLAISRLMGLAKDSNISLEKLIKVGNGGLITWIPEDFNKAINDARNQFSDSIGAPRIPDVKWEDIGGLDLVKDEIMDTIDMPLKHPELFSNGLKKRSGILFYGPPGTGKTLLAKAIATNFSLNFFSVKGPELLNMYIGESEANVRRVFQKARDAKPCVIFFDELDSVAPKRGNQGDSGGVMDRIVSQLLAELDGMSGGAEGGGDGVFVVGATNRPDLLDEALLRPGRFDKMLYLGISDTDEKQSKILEALTRKFKLADNVDLYEIAKRCSFTFTGADFYALCSDSMLNAMTRTANEVDAKIKKLNEELTSQGKEEISTRWWFDNAATPEDIDVLVQMEDFKKAQSELAPSVSAEELEHYLRVRENFEGGKEKAMANGTTSAANGTSQGIPHEFMQKVEELIGDGIDGIVDENGNHIHASSDH.

ATP is bound at residue 879–886 (GPPGTGKT).

Belongs to the AAA ATPase family. In terms of assembly, interacts with PEX1; forming the PEX1-PEX6 AAA ATPase complex, which is composed of a heterohexamer formed by a trimer of PEX1-PEX6 dimers.

Its subcellular location is the cytoplasm. The protein localises to the cytosol. It localises to the peroxisome membrane. The enzyme catalyses ATP + H2O = ADP + phosphate + H(+). Component of the PEX1-PEX6 AAA ATPase complex, a protein dislocase complex that mediates the ATP-dependent extraction of the PEX5 receptor from peroxisomal membranes, an essential step for PEX5 recycling. Specifically recognizes PEX5 monoubiquitinated at 'Cys-6', and pulls it out of the peroxisome lumen through the PEX2-PEX10-PEX12 retrotranslocation channel. Extraction by the PEX1-PEX6 AAA ATPase complex is accompanied by unfolding of the TPR repeats and release of bound cargo from PEX5. The sequence is that of Peroxisomal ATPase PEX6 (PEX6) from Debaryomyces hansenii (strain ATCC 36239 / CBS 767 / BCRC 21394 / JCM 1990 / NBRC 0083 / IGC 2968) (Yeast).